The following is a 466-amino-acid chain: Alpha-1A adrenergic receptor (466 aa).

The Extracellular segment spans residues 1-27; the sequence is MVFLSGNASDSSNCTQPPAPVNISKAI. Residues N7, N13, and N22 are each glycosylated (N-linked (GlcNAc...) asparagine). The helical transmembrane segment at 28–51 threads the bilayer; it reads LLGVILGGLILFGVLGNILVILSV. Residues 52 to 64 lie on the Cytoplasmic side of the membrane; it reads ACHRHLHSVTHYY. A helical transmembrane segment spans residues 65–88; the sequence is IVNLAVADLLLTSTVLPFSAIFEV. At 89–99 the chain is on the extracellular side; it reads LGYWAFGRVFC. C99 and C176 are oxidised to a cystine. The helical transmembrane segment at 100–122 threads the bilayer; sequence NIWAAVDVLCCTASIMGLCIISI. Over 123 to 143 the chain is Cytoplasmic; that stretch reads DRYIGVSYPLRYPTIVTQRRG. Residues 144 to 167 form a helical membrane-spanning segment; the sequence is LMALLCVWALSLVISIGPLFGWRQ. Residues 168–181 lie on the Extracellular side of the membrane; the sequence is PAPEDETICQINEE. The helical transmembrane segment at 182–205 threads the bilayer; that stretch reads PGYVLFSALGSFYLPLAIILVMYC. The Cytoplasmic segment spans residues 206–273; it reads RVYVVAKRES…FSREKKAAKT (68 aa). The residue at position 215 (S215) is a Phosphoserine; by PKA. Residues 274-297 traverse the membrane as a helical segment; the sequence is LGIVVGCFVLCWLPFFLVMPIGSF. Topologically, residues 298–305 are extracellular; it reads FPDFKPSE. Residues 306-329 form a helical membrane-spanning segment; sequence TVFKIVFWLGYLNSCINPIIYPCS. The Cytoplasmic portion of the chain corresponds to 330 to 466; sequence SQEFKKAFQN…ISLSENGEEV (137 aa). Residues 334–349 carry the Nuclear localization signal motif; sequence KKAFQNVLRIQCLCRK. C345 is lipidated: S-palmitoyl cysteine.

Belongs to the G-protein coupled receptor 1 family. Adrenergic receptor subfamily. ADRA1A sub-subfamily. In terms of assembly, homo- and heterooligomer. Heterooligomerizes with ADRA1B homooligomers in cardiac myocytes. Interacts with CAVIN4. Post-translationally, C-terminal Ser or Thr residues may be phosphorylated. Expressed in heart, brain, liver and prostate, but not in kidney, lung, adrenal, aorta and pituitary. Within the prostate, expressed in the apex, base, periurethral and lateral lobe. Isoform 4 is the most abundant isoform expressed in the prostate with high levels also detected in liver and heart.

The protein resides in the nucleus membrane. The protein localises to the cell membrane. Its subcellular location is the cytoplasm. It localises to the membrane. It is found in the caveola. Functionally, this alpha-adrenergic receptor mediates its action by association with G proteins that activate a phosphatidylinositol-calcium second messenger system. Its effect is mediated by G(q) and G(11) proteins. Nuclear ADRA1A-ADRA1B heterooligomers regulate phenylephrine(PE)-stimulated ERK signaling in cardiac myocytes. This Homo sapiens (Human) protein is Alpha-1A adrenergic receptor (ADRA1A).